The primary structure comprises 284 residues: Bifunctional protein FolD (284 aa).

NADP(+) contacts are provided by residues 165-167 (GRS), Ser190, and Ile231.

Belongs to the tetrahydrofolate dehydrogenase/cyclohydrolase family. Homodimer.

The enzyme catalyses (6R)-5,10-methylene-5,6,7,8-tetrahydrofolate + NADP(+) = (6R)-5,10-methenyltetrahydrofolate + NADPH. It carries out the reaction (6R)-5,10-methenyltetrahydrofolate + H2O = (6R)-10-formyltetrahydrofolate + H(+). Its pathway is one-carbon metabolism; tetrahydrofolate interconversion. In terms of biological role, catalyzes the oxidation of 5,10-methylenetetrahydrofolate to 5,10-methenyltetrahydrofolate and then the hydrolysis of 5,10-methenyltetrahydrofolate to 10-formyltetrahydrofolate. The protein is Bifunctional protein FolD of Clostridium kluyveri (strain ATCC 8527 / DSM 555 / NBRC 12016 / NCIMB 10680 / K1).